The chain runs to 985 residues: DNA ligase 4 (985 aa).

Disordered stretches follow at residues 1-27 (MDRLNNVGGETERELDEKYPNRPRNKH) and 43-70 (LNGNKKRPTGPAAARKKLGPHGGQQTLS). Over residues 10 to 20 (ETERELDEKYP) the composition is skewed to basic and acidic residues. Over residues 46–61 (NKKRPTGPAAARKKLG) the composition is skewed to basic residues. Glutamate 310, lysine 312, leucine 313, arginine 317, glutamate 379, phenylalanine 420, glutamate 480, lysine 485, lysine 502, and lysine 504 together coordinate ATP. Lysine 312 serves as the catalytic N6-AMP-lysine intermediate. Glutamate 379 contributes to the Mg(2+) binding site. A Mg(2+)-binding site is contributed by glutamate 480. BRCT domains follow at residues 711–804 (PSGH…PDLL) and 878–983 (LRGW…RFAP).

The protein belongs to the ATP-dependent DNA ligase family. It depends on Mg(2+) as a cofactor.

It localises to the nucleus. It carries out the reaction ATP + (deoxyribonucleotide)n-3'-hydroxyl + 5'-phospho-(deoxyribonucleotide)m = (deoxyribonucleotide)n+m + AMP + diphosphate.. In terms of biological role, DNA ligase involved in DNA non-homologous end joining (NHEJ); required for double-strand break (DSB) repair. The polypeptide is DNA ligase 4 (LIG4) (Coccidioides immitis (strain RS) (Valley fever fungus)).